The sequence spans 210 residues: Transcriptional regulator GfcR (210 aa).

Residues Val-39–Ile-60 form a disordered region. Residues Pro-48 to Ile-60 are compositionally biased toward basic and acidic residues.

The protein belongs to the purine/pyrimidine phosphoribosyltransferase family. GfcR subfamily.

Interaction with effectors modulates GfcR activity. 2-keto-3-deoxy-6-phosphogluconate (KDPG), fructose-1,6-bisphosphate (FBP), 2-keto-3-deoxy-6-phosphogalactonate (KDPGal) and glycerol-3-phosphate (G3P), which are intermediates of sugar and glycerol degradation pathways, can act as inducer molecules. DNA-binding transcriptional regulator that functions as a regulator of central sugar catabolic pathways. Is both a local regulator of specific steps in the pathways for D-glucose and D-fructose degradation and a global regulator of hexose catabolism. In the presence of D-glucose, activates expression of the gene encoding the gluconate dehydratase (gad), which is involved in D-glucose catabolism via the semiphosphorylative Entner-Doudoroff (spED) pathway. In the presence of D-fructose, activates expression of the genes encoding the PTS system EIIC component (ptfC) and the fructose-1,6-bisphosphate aldolase (fba), which are involved in D-fructose uptake and degradation via the modified Embden-Meyerhof pathway. In addition, in the presence of D-glucose, D-fructose, D-galactose or glycerol, it activates expression of the genes encoding glyceraldehyde-3-phosphate dehydrogenase (gap) and pyruvate kinase (pykA), enzymes common to all four degradation pathways. Acts by binding directly to the promoter region of the regulated genes. In Haloferax volcanii (strain ATCC 29605 / DSM 3757 / JCM 8879 / NBRC 14742 / NCIMB 2012 / VKM B-1768 / DS2) (Halobacterium volcanii), this protein is Transcriptional regulator GfcR.